A 29-amino-acid chain; its full sequence is Dermaseptin-1.2TR (29 aa).

Val29 is modified (valine amide).

In terms of tissue distribution, expressed by the skin glands.

Its subcellular location is the secreted. Its function is as follows. Has antimicrobial activity. This chain is Dermaseptin-1.2TR, found in Phyllomedusa trinitatis (Trinidad leaf frog).